The primary structure comprises 353 residues: uncharacterized protein (353 aa).

Residues 1–30 (MHLRHLFSSRLRGSLLLGSLLVVSSFSTQA) form the signal peptide.

As to quaternary structure, monomer.

This is an uncharacterized protein from Escherichia coli (strain K12).